The following is a 455-amino-acid chain: MSFIPHKLEQIKKMLDTIGASSVDQLFDEIPRHLRADTLNIKDGINEIQLANLMRKRANKNHHNINYIGAGAYSHHIPAAIWDIVARGEFYTAYTPYQAEASQGGLQVIYEFQTMMAGLTGMDASNASMYDGATALAESVLMAIRSNKKAKSQKVLIAEALHPTYLRVLETITKHQGIEFDIVNLDSKNGKTDVTKLEDFANTNYAAVVIQSPNFLGQLADVDGITNWAHKHGALVIAVTNPMSLAILKSPAEWGDNGADIVCGEGQPIGVPLASGGPYFGFMTCKMAHVRQMPGRIVGRTVDLDGNEGFCLTLQAREQHIRRAKATSNICTNQGLMVTAATIYMSLLGAEGLERVASISHENTQTLATELAKINGVSIRFNSAFFNEVVIDLPVNAETFVTEMEKEAIDAGYFLGEYHSDLANSIMVCATEIHTSEDIKEYIEATKKVLARIGG.

Belongs to the GcvP family. N-terminal subunit subfamily. The glycine cleavage system is composed of four proteins: P, T, L and H. In this organism, the P 'protein' is a heterodimer of two subunits.

It carries out the reaction N(6)-[(R)-lipoyl]-L-lysyl-[glycine-cleavage complex H protein] + glycine + H(+) = N(6)-[(R)-S(8)-aminomethyldihydrolipoyl]-L-lysyl-[glycine-cleavage complex H protein] + CO2. Its function is as follows. The glycine cleavage system catalyzes the degradation of glycine. The P protein binds the alpha-amino group of glycine through its pyridoxal phosphate cofactor; CO(2) is released and the remaining methylamine moiety is then transferred to the lipoamide cofactor of the H protein. This is Probable glycine dehydrogenase (decarboxylating) subunit 1 from Francisella tularensis subsp. holarctica (strain LVS).